We begin with the raw amino-acid sequence, 363 residues long: Ferredoxin--NADP reductase, cyanelle (363 aa).

A cyanelle-targeting transit peptide spans 1 to 65; it reads MAFVASVPVF…TFEVDTTIRA (65 aa). Residues 84–206 enclose the FAD-binding FR-type domain; it reads ANPYIGKCIY…TGPVGTTMLM (123 aa). Residues 142–145, 163–165, tyrosine 169, 180–182, and threonine 221 contribute to the FAD site; these read RLYS, SVK, and VCS. NADP(+) is bound by residues serine 145 and lysine 165. NADP(+)-binding positions include threonine 221, 253-254, 283-284, lysine 293, 322-323, and glutamate 361; these read VP, SR, and GL.

This sequence belongs to the ferredoxin--NADP reductase type 1 family. The cofactor is FAD.

Its subcellular location is the plastid. The protein localises to the cyanelle stroma. It localises to the cyanelle thylakoid membrane. It carries out the reaction 2 reduced [2Fe-2S]-[ferredoxin] + NADP(+) + H(+) = 2 oxidized [2Fe-2S]-[ferredoxin] + NADPH. May play a key role in regulating the relative amounts of cyclic and non-cyclic electron flow to meet the demands of the plant for ATP and reducing power. This is Ferredoxin--NADP reductase, cyanelle (PETH) from Cyanophora paradoxa.